The sequence spans 96 residues: Large ribosomal subunit protein uL23 (96 aa).

The protein belongs to the universal ribosomal protein uL23 family. As to quaternary structure, part of the 50S ribosomal subunit. Contacts protein L29, and trigger factor when it is bound to the ribosome.

Functionally, one of the early assembly proteins it binds 23S rRNA. One of the proteins that surrounds the polypeptide exit tunnel on the outside of the ribosome. Forms the main docking site for trigger factor binding to the ribosome. In Endomicrobium trichonymphae, this protein is Large ribosomal subunit protein uL23.